The primary structure comprises 1033 residues: MTSVRCKLAQYLEDLEDVDLKKFKMHLEDYPPEKGCIPVPRGQMEKADHLDLATLMIDFNGEEKAWAMAVWIFAAINRRDLWEKAKKDQPEWNDTCTSHSSMVCQEDSLEEEWMGLLGYLSRISICKKKKDYCKMYRRHVRSRFYSIKDRNARLGESVDLNSRYTQLQLVKEHPSKQEREHELLTIGRTKMRDSPMSSLKLELLFEPEDGHSEPVHTVVFQGAAGIGKTILARKIMLDWALGKLFKDKFDYLFFIHCREVSLRTPRSLADLIVSCWPDPNPPVCKILRKPSRILFLMDGFDELQGAFDEHIGEVCTDWQKAVRGDILLSSLIRKKLLPKASLLITTRPVALEKLQHLLDHPRHVEILGFSEAKRKEYFFKYFSNELQAREAFRLIQENEVLFTMCFIPLVCWIVCTGLKQQMETGKSLAQTSKTTTAVYVFFLSSLLQSRGGIEEHLFSDYLQGLCSLAADGIWNQKILFEECDLRKHGLQKTDVSAFLRMNVFQKEVDCERFYSFSHMTFQEFFAAMYYLLEEEAEGETVRKGPGGCSDLLNRDVKVLLENYGKFEKGYLIFVVRFLFGLVNQERTSYLEKKLSCKISQQVRLELLKWIEVKAKAKKLQWQPSQLELFYCLYEMQEEDFVQSAMDHFPKIEINLSTRMDHVVSSFCIKNCHRVKTLSLGFFHNSPKEEEEERRGGRPLDQVQCVFPDTHVACSSRLVNCCLTSSFCRGLFSSLSTNRSLTELDLSDNTLGDPGMRVLCEALQHPGCNIQRLWLGRCGLSHQCCFDISSVLSSSQKLVELDLSDNALGDFGIRLLCVGLKHLLCNLQKLWLVSCCLTSACCQDLALVLSSNHSLTRLYIGENALGDSGVQVLCEKMKDPQCNLQKLGLVNSGLTSICCSALTSVLKTNQNFTHLYLRSNALGDTGLRLLCEGLLHPDCKLQMLELDNCSLTSHSCWNLSTILTHNHSLRKLNLGNNDLGDLCVVTLCEVLKQQGCLLQSLQLGEMYLNRETKRALEALQEEKPELTIVFEISW.

The Pyrin domain occupies 1–91; it reads MTSVRCKLAQ…WEKAKKDQPE (91 aa). Serine 3 is subject to Phosphoserine. The cysteines at positions 6 and 104 are disulfide-linked. Phosphotyrosine is present on tyrosine 11. Cysteine 126 is lipidated: S-palmitoyl cysteine. The tract at residues 127-130 is required for binding to phosphatidylinositol 4-phosphate (PtdIns4P); it reads KKKK. A phosphotyrosine; by BTK mark is found at tyrosine 132, tyrosine 136, and tyrosine 145. Residues 136–206 enclose the FISNA domain; it reads YRRHVRSRFY…SSLKLELLFE (71 aa). Serine 157 is subject to Phosphoserine. Tyrosine 164 is subject to Phosphotyrosine; by BTK. Threonine 165 lines the ATP pocket. Residue serine 194 is modified to Phosphoserine; by MAPK8. Serine 197 is subject to Phosphoserine. One can recognise an NACHT domain in the interval 216-532; that stretch reads HTVVFQGAAG…EFFAAMYYLL (317 aa). 222–230 is a binding site for ATP; it reads GAAGIGKTI. Serine 261 bears the Phosphoserine mark. Serine 291 carries the post-translational modification Phosphoserine; by PKD/PRKD1. A Glycyl lysine isopeptide (Lys-Gly) (interchain with G-Cter in ubiquitin) cross-link involves residue lysine 320. Serine 330 is subject to Phosphoserine. The KFERQ-like motif 1 motif lies at 351–355; sequence LEKLQ. Lysine 426 is covalently cross-linked (Glycyl lysine isopeptide (Lys-Gly) (interchain with G-Cter in ubiquitin)). Histidine 518 contacts ATP. A KFERQ-like motif 2 motif is present at residues 601-605; the sequence is QVRLE. Lysine 687 participates in a covalent cross-link: Glycyl lysine isopeptide (Lys-Gly) (interchain with G-Cter in ubiquitin). Serine 725 and serine 732 each carry phosphoserine. LRR repeat units lie at residues 739–759, 768–789, 796–816, 825–846, and 853–873; these read SLTELDLSDNTLGDPGMRVLC, NIQRLWLGRCGLSHQCCFDISS, KLVELDLSDNALGDFGIRLLC, NLQKLWLVSCCLTSACCQDLAL, and SLTRLYIGENALGDSGVQVLC. Residues 795–799 carry the KFERQ-like motif 3 motif; the sequence is QKLVE. Position 803 is a phosphoserine; by CSNK1A1 (serine 803). Residues cysteine 834, cysteine 835, and cysteine 841 are each lipidated (S-palmitoyl cysteine). Phosphotyrosine is present on tyrosine 858. Lysine 875 participates in a covalent cross-link: Glycyl lysine isopeptide (Lys-Gly) (interchain with G-Cter in ubiquitin). LRR repeat units lie at residues 882–903, 910–930, 939–960, and 967–988; these read NLQKLGLVNSGLTSICCSALTS, NFTHLYLRSNALGDTGLRLLC, KLQMLELDNCSLTSHSCWNLST, and SLRKLNLGNNDLGDLCVVTLCE. Residue cysteine 955 is the site of S-palmitoyl cysteine attachment. Lysine 970 participates in a covalent cross-link: Glycyl lysine isopeptide (Lys-Gly) (interchain with G-Cter in ubiquitin). The short motif at 988–992 is the KFERQ-like motif 4 element; that stretch reads EVLKQ. At serine 1032 the chain carries Phosphoserine.

This sequence belongs to the NLRP family. As to quaternary structure, sensor component of NLRP3 inflammasomes; inflammasomes are supramolecular complexes that assemble in the cytosol in response to pathogens and other damage-associated signals and play critical roles in innate immunity and inflammation. The core of NLRP3 inflammasomes consists of a signal sensor component (NLRP3), an adapter (PYCARD/ASC), which recruits an effector pro-inflammatory caspase (CASP1 and, possibly, CASP4 and CASP5). Homodecamer; inactive NLRP3 forms homodecameric double-ring cages that hide pyrin domains within NACHT-LRR rings to avoid premature activation. Interacts (via pyrin domain) with PYCARD/ASC (via pyrin domain); interaction is direct. Interacts (via LRR repeat domain) with NEK7 (via N-terminus); the interaction is required for the formation of the complex NLRP3:PYCARD, oligomerization of PYCARD/ASC and activation of CASP1. Interacts (via LRR repeat domain) with NR4A1/Nur77 (via N-terminus); the interaction is direct, requires activation of NR4A1 by its ligands NBRE-containing dsDNA and lipopolysaccharide, and stimulates the association of NLRP3 with NEK7 for non-canonical NLRP3 inflammasome activation. Interacts with CARD8; leading to inhibit formation of the NLRP3 inflammasome. Interacts with MEFV; this interaction targets NLRP3 to degradation by autophagy, hence preventing excessive IL1B- and IL18-mediated inflammation. Interacts with EIF2AK2/PKR; this interaction requires EIF2AK2 activity, is accompanied by EIF2AK2 autophosphorylation and promotes inflammasome assembly in response to specific stimuli. Interacts with GBP5 (via DAPIN domain); this interaction promotes inflammasome assembly in response to microbial and soluble, but not crystalline, agents. Interacts with PML (isoform PML-1) (via the leucine-rich repeat (LRR) domain); PML-mediated increase in NLRP3 inflammasome activation does not depend upon this interaction. Interacts (via NACHT domain) with DHX33 (via DEAH box); NLRP3 activation in presence of cytosolic dsRNA is mediated by DHX33. Interacts (via NACHT and LRR domains) with ARRB2; this interaction is direct and inducible by polyunsaturated fatty acids (PUFAs). Interacts (via NACHT domain) with DDX3X under both LPS-primed and inflammasome-activating conditions. Interacts with IRF4 (via the LRR domain); this interaction is direct and is required for optimal IRF4 binding to IL4 promoter and efficient IL4 transactivation during differentiation of Th2 helper T-cells. Interacts with MAVS; promoting localization to mitochondria and activation of the NLRP3 inflammasome. Interacts with MARK4; promoting localization of NLRP3 to the microtubule organizing center (MTOC). Interacts with TRIM50; this interaction also promotes NLRP3 oligomerization and subsequent inflammasome activation. Interacts with IRGM; preventing NLRP3 inflammasome assembly and promoting NLRP3 degradation. Interacts (via KFERQ-like motifs) with HSPA8/HSC70; promoting NLRP3 degradation by the chaperone-mediated autophagy pathway. Interacts (via NACHT and LLR domains) with ABHD8; this interaction is enhanced in the presence of NLRP3 inflammasome inducers, such as ATP, nigericin, silica, or alum. Interaction with ABHD8 leads the recruitment of ZDHHC12, hence facilitating NLRP3 palmitoylation and degradation by the chaperone-mediated autophagy pathway (CMA), therefore attenuating NLRP3 inflammasome activation. Post-translationally, phosphorylation at Ser-194 by MAPK8/JNK1 increases inflammasome activation by promoting deubiquitination by BRCC3 and NLRP3 homooligomerization. Phosphorylation at Ser-803 by CSNK1A1 prevents inflammasome activation by preventing NEK7 recruitment. Phosphorylation at Ser-3 in the pyrin domain inhibits homomultimerization of NLRP3 and activation of the NLRP3 inflammasome: dephosphorylation by protein phosphatase 2A (PP2A) promotes assembly of the NLRP3 inflammasome. Phosphorylation at Ser-291 by PKD/PRKD1 promotes NLRP3 inflammasome assembly. Phosphorylation by ERK1/MAPK3 promotes NLRP3 inflammasome assembly. Phosphorylation by BTK (at Tyr-132, Tyr-136, Tyr-145 and Tyr-164) in the region that mediates binding to phosphatidylinositol phosphate, promotes relocalization of NLRP3 and assembly of the NLRP3 inflammasome. Phosphorylation at Tyr-858 inhibits NLRP3 inflammasome assembly: dephosphorylation by PTPN22 promotes inflammasome activation Phosphorylated by LATS1 and LATS2 at Ser-261 following palmitoylation by ZDHHC1, promoting its relocalization to the microtubule organizing center (MTOC), where NLRP3 is activated by NEK7, leading to inflammasome assembly and activation. In terms of processing, ubiquitinated; undergoes both 'Lys-48'- and 'Lys-63'-linked polyubiquitination. Ubiquitination does not lead to degradation, but inhibits inflammasome activation. Deubiquitination is catalyzed by BRCC3 and associated with NLRP3 activation and inflammasome assembly. This process can be induced by the activation of Toll-like receptors (by LPS), through a non-transcriptional pathway dependent on the mitochondrial production of reactive oxygen species, and by ATP. Ubiquitinated by TRIM31 via 'Lys-48'-linked ubiquitination, leading to its degradation by the proteasome. Ubiquitinated at Lys-687 by the SCF(FBXL2) complex, leading to its degradation by the proteasome. Ubiquitinated by TRIM35 via 'lys-48' and 'Lys-63'-linked ubiquitination leading to inhibition of NLRP3 inflammasome activation. Undergoes 'Lys-27'-linked polyubiquitination by MARCHF5, leading to NLRP3-NEK7 complex formation and NLRP3 oligomerization. The disulfide bond in the pyrin domain might play a role in reactive oxygen species-mediated activation. Post-translationally, palmitoylation by ZDHHC12 promotes NLRP3 degradation by the chaperone-mediated autophagy pathway (CMA) and therefore limits NLRP3 inflammasome activation. Interaction with ZDHHC12, and hence NLRP3 palmitoylation, is enhanced by ABHD8. Following palmitoylation, HSPA8/HSC70 recognizes and binds the KFERQ-like motifs on NLRP3 and promotes NLRP3 recruitment to lysosomes, where it is degraded via the chaperone-mediated autophagy pathway in a LAMP2-dependent process. Palmitoylation at Cys-834 and Cys-835 by ZDHHC5 enhances its binding to NEK7 leading to inflammasome assembly and activation. Palmitoylation at Cys-126 and Cys-955 by ZDHHC1 facilitates phosphorylation at Ser-261 by LATS1 and LATS2, promoting its relocalization to the microtubule organizing center (MTOC), where NLRP3 is activated by NEK7, leading to inflammasome assembly and activation. Depalmitoylated by ABHD17A. In terms of processing, degraded via selective autophagy following interaction with Irgm1. Irgm1 promotes NLRP3 recruitment to autophagosome membranes, promoting its SQSTM1/p62-dependent autophagy-dependent degradation. In terms of tissue distribution, expressed with high levels in peripheral blood leukocytes, including Th2 lymphocytes and macrophages. Expressed at low levels in resting osteoblasts (at protein level).

The protein resides in the cytoplasm. It localises to the cytosol. It is found in the inflammasome. Its subcellular location is the cytoskeleton. The protein localises to the microtubule organizing center. The protein resides in the golgi apparatus membrane. It localises to the endoplasmic reticulum. It is found in the mitochondrion. Its subcellular location is the secreted. The protein localises to the nucleus. The catalysed reaction is ATP + H2O = ADP + phosphate + H(+). With respect to regulation, under resting conditions, NLRP3 binds ADP and is autoinhibited. Inactive NLRP3 forms homodecameric double-ring cages that hide pyrin domains within NACHT-LRR rings to avoid premature activation. NLRP3 activation stimuli include extracellular ATP, nigericin, reactive oxygen species, crystals of monosodium urate or cholesterol, amyloid-beta fibers, environmental or industrial particles and nanoparticles, such as asbestos, silica, aluminum salts, cytosolic dsRNA, etc. Almost all stimuli trigger intracellular K(+) efflux. These stimuli lead to membrane perturbations that induce activation of NLRP3. Upon activation, NLRP3 is transported to microtubule organizing center (MTOC), where it is unlocked by NEK7, leading to its relocalization to dispersed trans-Golgi network (dTGN) vesicle membranes and recruitment of PYCARD/ASC for the formation of an active inflammasome complex. NEK7-activated NLRP3 forms a disk-shaped inflammasome. NLRP3 and PYCARD/ASC interact via their respective pyrin domains; interaction initiates speck formation (nucleation) which greatly enhances further addition of soluble PYCARD/ASC molecules to the speck in a prion-like polymerization process. Clustered PYCARD/ASC nucleates the formation of CASP1 filaments through the interaction of their respective CARD domains, acting as a platform for CASP1 polymerization and activation. Active CASP1 then processes IL1B and IL18 precursors, leading to the release of mature cytokines in the extracellular milieu and inflammatory response. NLRP3 inflammasome assembly is inhibited by IRGM, which impedes NLRP3 oligomerization. NLRP3 inflammasome is inhibited by cyclic AMP (cAMP), which directly binds NLRP3; inhibition is relieved by calcium-sensing receptor CASR, which inhibits production of cAMP. Specifically inhibited by sulfonylurea MCC950 (also named CP-456,773, CRID3), a potent and specific small-molecule inhibitor of the NLRP3 inflammasome that acts by preventing ATP hydrolysis. Functionally, sensor component of the NLRP3 inflammasome, which mediates inflammasome activation in response to defects in membrane integrity, leading to secretion of inflammatory cytokines IL1B and IL18 and pyroptosis. In response to pathogens and other damage-associated signals that affect the integrity of membranes, initiates the formation of the inflammasome polymeric complex composed of NLRP3, CASP1 and PYCARD/ASC. Recruitment of pro-caspase-1 (proCASP1) to the NLRP3 inflammasome promotes caspase-1 (CASP1) activation, which subsequently cleaves and activates inflammatory cytokines IL1B and IL18 and gasdermin-D (GSDMD), promoting cytokine secretion and pyroptosis. Activation of NLRP3 inflammasome is also required for HMGB1 secretion; stimulating inflammatory responses. Under resting conditions, ADP-bound NLRP3 is autoinhibited. NLRP3 activation stimuli include extracellular ATP, nigericin, reactive oxygen species, crystals of monosodium urate or cholesterol, amyloid-beta fibers, environmental or industrial particles and nanoparticles, such as asbestos, silica, aluminum salts, cytosolic dsRNA, etc. Almost all stimuli trigger intracellular K(+) efflux. These stimuli lead to membrane perturbation and activation of NLRP3. Upon activation, NLRP3 is transported to microtubule organizing center (MTOC), where it is unlocked by NEK7, leading to its relocalization to dispersed trans-Golgi network (dTGN) vesicle membranes and formation of an active inflammasome complex. Associates with dTGN vesicle membranes by binding to phosphatidylinositol 4-phosphate (PtdIns4P). Shows ATPase activity. Independently of inflammasome activation, regulates the differentiation of T helper 2 (Th2) cells and has a role in Th2 cell-dependent asthma and tumor growth. During Th2 differentiation, required for optimal IRF4 binding to IL4 promoter and for IRF4-dependent IL4 transcription. Binds to the consensus DNA sequence 5'-GRRGGNRGAG-3'. May also participate in the transcription of IL5, IL13, GATA3, CCR3, CCR4 and MAF. The polypeptide is NACHT, LRR and PYD domains-containing protein 3 (Mus musculus (Mouse)).